A 428-amino-acid chain; its full sequence is Probable G-protein coupled receptor (428 aa).

At M1–D46 the chain is on the extracellular side. N-linked (GlcNAc...) asparagine glycosylation is present at N18. Residues L47–V67 form a helical membrane-spanning segment. At M68–C93 the chain is on the cytoplasmic side. Residues A94–F114 form a helical membrane-spanning segment. At T115–Q120 the chain is on the extracellular side. A helical transmembrane segment spans residues V121–S141. Residues V142 to L162 are Cytoplasmic-facing. The helical transmembrane segment at V163 to F183 threads the bilayer. The Extracellular portion of the chain corresponds to G184 to G210. The helical transmembrane segment at V211 to V231 threads the bilayer. Topologically, residues Y232–A293 are cytoplasmic. The helical transmembrane segment at A294–F314 threads the bilayer. Over H315–A428 the chain is Extracellular. Residues S398 to N414 are compositionally biased toward polar residues. The tract at residues S398–A428 is disordered.

This sequence belongs to the G-protein coupled receptor 1 family.

Its subcellular location is the cell membrane. The chain is Probable G-protein coupled receptor from Oryzias latipes (Japanese rice fish).